The primary structure comprises 235 residues: Glycerol-3-phosphate acyltransferase (235 aa).

Transmembrane regions (helical) follow at residues 2–22 (FTLI…TSII), 56–76 (TVTI…VVFF), 94–114 (LIAG…GFKG), 126–146 (FGIA…VVFL), 152–172 (VASI…KYLF), and 190–210 (FIHD…AAAI).

Belongs to the PlsY family. Probably interacts with PlsX.

It is found in the cell inner membrane. It carries out the reaction an acyl phosphate + sn-glycerol 3-phosphate = a 1-acyl-sn-glycero-3-phosphate + phosphate. It functions in the pathway lipid metabolism; phospholipid metabolism. Catalyzes the transfer of an acyl group from acyl-phosphate (acyl-PO(4)) to glycerol-3-phosphate (G3P) to form lysophosphatidic acid (LPA). This enzyme utilizes acyl-phosphate as fatty acyl donor, but not acyl-CoA or acyl-ACP. The protein is Glycerol-3-phosphate acyltransferase of Chlorobium phaeobacteroides (strain BS1).